Here is a 320-residue protein sequence, read N- to C-terminus: Beta-ketoacyl-[acyl-carrier-protein] synthase III (320 aa).

Catalysis depends on residues cysteine 114 and histidine 247. The ACP-binding stretch occupies residues 248–252 (QANRR). Residue asparagine 277 is part of the active site.

This sequence belongs to the thiolase-like superfamily. FabH family. In terms of assembly, homodimer.

It localises to the cytoplasm. The enzyme catalyses malonyl-[ACP] + acetyl-CoA + H(+) = 3-oxobutanoyl-[ACP] + CO2 + CoA. The protein operates within lipid metabolism; fatty acid biosynthesis. Its function is as follows. Catalyzes the condensation reaction of fatty acid synthesis by the addition to an acyl acceptor of two carbons from malonyl-ACP. Catalyzes the first condensation reaction which initiates fatty acid synthesis and may therefore play a role in governing the total rate of fatty acid production. Possesses both acetoacetyl-ACP synthase and acetyl transacylase activities. Its substrate specificity determines the biosynthesis of branched-chain and/or straight-chain of fatty acids. The chain is Beta-ketoacyl-[acyl-carrier-protein] synthase III from Neisseria meningitidis serogroup A / serotype 4A (strain DSM 15465 / Z2491).